The following is a 2134-amino-acid chain: Genome polyprotein (2134 aa).

The Cytoplasmic portion of the chain corresponds to 1-1377; that stretch reads MSKLFSTVGK…WLFEKIKTSK (1377 aa). The LRAT domain maps to 781–882; the sequence is IVSCSGEKAK…GDYGTKEGEK (102 aa). Active-site residues include H791 and H802. The active-site Acyl-thioester intermediate is the C863. The 163-residue stretch at 1127–1289 folds into the SF3 helicase domain; that stretch reads LNKLGRLDKP…EEFSTHAMLD (163 aa). Position 1153-1160 (1153-1160) interacts with ATP; it reads GNRGGGKS. The stretch at 1378-1392 is an intramembrane region; it reads WYILGCVGAVLSVSV. Residues 1393–2134 lie on the Cytoplasmic side of the membrane; the sequence is LGVFAYHMIK…VKYRFIDDSF (742 aa). Y1415 bears the O-(5'-phospho-RNA)-tyrosine mark. In terms of domain architecture, Peptidase C3 spans 1431–1643; that stretch reads DAQSVVDISN…ITKEMIEEML (213 aa). Residues H1477, D1515, and C1603 each act as for protease 3C activity in the active site. In terms of domain architecture, RdRp catalytic spans 1880 to 2001; it reads DLVVGLDFSN…CIKKEYLDQK (122 aa).

Belongs to the picornaviridae polyprotein family. Post-translationally, specific enzymatic cleavages by the viral protease in vivo yield a variety of precursors and mature proteins. During virion maturation, non-infectious particles are rendered infectious following cleavage of VP0. This maturation cleavage is followed by a conformational change of the particle. VPg is uridylylated by the polymerase and is covalently linked to the 5'-end of genomic RNA. This uridylylated form acts as a nucleotide-peptide primer for the polymerase.

Its subcellular location is the virion. It is found in the host cytoplasm. It localises to the host cytoplasmic vesicle membrane. The catalysed reaction is RNA(n) + a ribonucleoside 5'-triphosphate = RNA(n+1) + diphosphate. It carries out the reaction a ribonucleoside 5'-triphosphate + H2O = a ribonucleoside 5'-diphosphate + phosphate + H(+). It catalyses the reaction Selective cleavage of Gln-|-Gly bond in the poliovirus polyprotein. In other picornavirus reactions Glu may be substituted for Gln, and Ser or Thr for Gly.. Functionally, capsid proteins VP1, VP2, and VP3 form a closed capsid enclosing the viral positive strand RNA genome. All these proteins contain a beta-sheet structure called beta-barrel jelly roll. Together they form an icosahedral capsid (T=3) composed of 60 copies of each VP1, VP2, and VP3, with a diameter of approximately 300 Angstroms. VP1 is situated at the 12 fivefold axes, whereas VP2 and VP3 are located at the quasi-sixfold axes. Its function is as follows. VP0 precursor is a component of immature procapsids. The N-terminal domain of VP0, protein VP4, is needed for the assembly of 12 pentamers into the icosahedral structure. Unlike other picornaviruses, AEV VP4 may not be myristoylated. Protein 2B and 2BC precursor affect membrane integrity and cause an increase in membrane permeability. In terms of biological role, associates with and induces structural rearrangements of intracellular membranes. It displays RNA-binding, nucleotide binding and NTPase activities. Functionally, protein 3A, via its hydrophobic domain, serves as membrane anchor. Its function is as follows. Protein 3B is covalently linked to the 5'-end of both the positive-strand and negative-strand genomic RNAs. It acts as a genome-linked replication primer. Cysteine protease that generates mature viral proteins from the precursor polyprotein. In addition to its proteolytic activity, it binds to viral RNA, and thus influences viral genome replication. RNA and substrate bind cooperatively to the protease. In terms of biological role, RNA-directed RNA polymerase 3D-POL replicates genomic and antigenomic RNA by recognizing replications specific signals. This is Genome polyprotein from Avian encephalomyelitis virus (strain Calnek vaccine) (AEV).